We begin with the raw amino-acid sequence, 284 residues long: Transmembrane protein 163b (284 aa).

The tract at residues 1–44 is disordered; the sequence is MTDSSSASDPTAGPVDPGPAPSAPDPALEDPASTPANGHHPNQA. The Cytoplasmic segment spans residues 1 to 83; that stretch reads MTDSSSASDP…HEAQSYRKKA (83 aa). Residues 84 to 104 form a helical membrane-spanning segment; sequence LWVSWVSIVVTMILAIAAFTV. Residues 105–111 lie on the Extracellular side of the membrane; sequence SIMRHSA. Residues 112–132 form a helical membrane-spanning segment; sequence SAFGFAFDATLDVLSSIIVLW. The Cytoplasmic segment spans residues 133-145; the sequence is RYSNAAAVHSAHR. A helical membrane pass occupies residues 146 to 166; the sequence is EYIACVILGVVFILSAITILV. Over 167-182 the chain is Extracellular; sequence KAIHDLATKLEPEVDD. Residues 183–203 traverse the membrane as a helical segment; it reads FLYSVSVISGVVCTVLCVCKF. Residues 204–212 are Cytoplasmic-facing; sequence MLGKVLTSR. The chain crosses the membrane as a helical span at residues 213–233; the sequence is ALITDGFNSLVGGVMGFSILI. At 234–243 the chain is on the extracellular side; sequence SAEVFKHEPS. A helical membrane pass occupies residues 244-264; sequence VWFLDGTIGILIGLIILAYGV. Residues 265 to 284 lie on the Cytoplasmic side of the membrane; sequence KLLKDMVPRIRQTRHYERFE.

This sequence belongs to the TMEM163 family.

The protein resides in the cytoplasmic vesicle. It localises to the secretory vesicle. The protein localises to the synaptic vesicle membrane. It is found in the early endosome membrane. Its subcellular location is the late endosome membrane. The protein resides in the lysosome membrane. It localises to the cell membrane. It carries out the reaction Zn(2+)(in) = Zn(2+)(out). Functionally, zinc ion transporter that mediates zinc efflux and plays a crucial role in intracellular zinc homeostasis. Binds the divalent cations Zn(2+), Ni(2+), and to a minor extent Cu(2+). Is a functional modulator of P2X purinoceptors, including P2RX1, P2RX3, P2RX4 and P2RX7. Plays a role in central nervous system development and is required for myelination, and survival and proliferation of oligodendrocytes. This Danio rerio (Zebrafish) protein is Transmembrane protein 163b.